The primary structure comprises 450 residues: Phosphoglucosamine mutase (450 aa).

Ser104 functions as the Phosphoserine intermediate in the catalytic mechanism. Mg(2+) is bound by residues Ser104, Asp243, Asp245, and Asp247. Phosphoserine is present on Ser104.

It belongs to the phosphohexose mutase family. Mg(2+) is required as a cofactor. In terms of processing, activated by phosphorylation.

It catalyses the reaction alpha-D-glucosamine 1-phosphate = D-glucosamine 6-phosphate. In terms of biological role, catalyzes the conversion of glucosamine-6-phosphate to glucosamine-1-phosphate. The sequence is that of Phosphoglucosamine mutase from Cutibacterium acnes (strain DSM 16379 / KPA171202) (Propionibacterium acnes).